Consider the following 641-residue polypeptide: Sodium-dependent nutrient amino acid transporter 1 (641 aa).

A disordered region spans residues 1–36; that stretch reads MELKGVQPSNGSANGNGTTNAASTEKTDAEKHTPER. The Cytoplasmic segment spans residues 1–38; it reads MELKGVQPSNGSANGNGTTNAASTEKTDAEKHTPERTN. Residues 9–24 are compositionally biased toward low complexity; it reads SNGSANGNGTTNAAST. The span at 25 to 35 shows a compositional bias: basic and acidic residues; sequence EKTDAEKHTPE. 3 helical membrane passes run 39–59, 72–92, and 109–129; these read WGNG…LGNV, GAFL…MYYL, and SVVP…ICII. N-linked (GlcNAc...) asparagine glycosylation is found at N183 and N188. A run of 9 helical transmembrane segments spans residues 229–249, 258–278, 307–327, 341–361, 401–421, 441–461, 474–494, 516–536, and 552–572; these read PDWK…LVIM, AAYF…IRAV, AVVQ…MFAS, IVTT…FAIL, LFSV…IVAL, VALI…TPGG, TYVV…VYGL, CWSF…MVTI, and IAGW…GLWY.

It belongs to the sodium:neurotransmitter symporter (SNF) (TC 2.A.22) family.

It localises to the membrane. In terms of biological role, unusual broad substrate spectrum amino acid:sodium cotransporter that promotes absorption of the D isomers of essential amino acids. Neutral amino acids are the preferred substrates, especially methionine and phenylalanine. The polypeptide is Sodium-dependent nutrient amino acid transporter 1 (Drosophila erecta (Fruit fly)).